Consider the following 260-residue polypeptide: POLG alternative reading frame (260 aa).

2 disordered regions span residues 1–50 (MEPK…LRPR) and 108–219 (ARRG…RRGG). 3 stretches are compositionally biased toward low complexity: residues 36–48 (AGSSSGALGLQLR), 116–154 (GRGAPQRRAPAEARALGAASRALARRGAAPAAPLRGQPG), and 164–186 (AEPALPGGGQLAVAGPAAPEAPG). Positions 104–130 (ANLRARRGDAWRGRGAPQRRAPAEARA) are required for nucleolar localization. Gly residues-rich tracts occupy residues 187–199 (LGLGGGLDPVRPR) and 209–219 (RGAGPGVRRGG).

In terms of assembly, interacts with C1QBP; the interaction results in nucleolar localization of C1QBP, probably due to prevention of C1QBP maturation and redirection from mitochondria to nucleoli. Post-translationally, undergoes proteolytic cleavage to produce a secreted C-terminal fragment.

It localises to the nucleus. It is found in the nucleolus. The protein resides in the secreted. The chain is POLG alternative reading frame from Homo sapiens (Human).